The chain runs to 469 residues: Zinc finger and BTB domain-containing protein 8A.1-B (469 aa).

In terms of domain architecture, BTB spans 24–92; it reads CDCHIIVEGQ…VYSGKLPLSG (69 aa). 2 consecutive C2H2-type zinc fingers follow at residues 315–337 and 343–366; these read FKCP…LRCH and YPCE…QTIH.

It localises to the nucleus. May be involved in transcriptional regulation. The protein is Zinc finger and BTB domain-containing protein 8A.1-B (zbtb8a.1-b) of Xenopus laevis (African clawed frog).